The following is a 285-amino-acid chain: Short chain dehydrogenase sol3 (285 aa).

Positions 39, 64, and 87 each coordinate NADP(+). Residues S168 and Y200 each act as proton donor in the active site. Residues Y200, K204, and S234 each contribute to the NADP(+) site. K204 (lowers pKa of active site Tyr) is an active-site residue.

The protein belongs to the short-chain dehydrogenases/reductases (SDR) family.

The protein operates within phytotoxin biosynthesis. Short chain dehydrogenase; part of the gene cluster that mediates the biosynthesis of the phytotoxin solanapyrone, a causal agent of early blight disease of potato and tomato. The prosolanapyrone synthase sol1 is a polyketide synthase that produces the octaketide desmethylprosolanapyrone I via sequential condensations of 7 malonyl-CoA units with one acetyl-CoA unit, and one methylation step. The octaketide backbone is further methylated by the sol2 O-methyltransferase to yield prosolanapyrone I. Prosolanapyrone I is hydroxylated to prosolanapyrone II by the cytochrome P450 monooxygenase sol6. The solanapyrone synthase sol5 then catalyzes the oxidation of prosolanapyrone II and the subsequent Diels Alder cycloisomerization of the product prosolanapyrone III to solanapyrones A and D. Solanapyrones A and D are then converted into solanapyrones B and E, respectively, by the sol3 dehydrogenase. In Alternaria solani, this protein is Short chain dehydrogenase sol3 (sol3).